Reading from the N-terminus, the 256-residue chain is Small ribosomal subunit protein eS1 (256 aa).

The residue at position 2 (alanine 2) is an N-acetylalanine; partial.

This sequence belongs to the eukaryotic ribosomal protein eS1 family. In terms of assembly, component of the small ribosomal subunit. Mature ribosomes consist of a small (40S) and a large (60S) subunit. The 40S subunit contains about 33 different proteins and 1 molecule of RNA (18S). The 60S subunit contains about 49 different proteins and 3 molecules of RNA (25S, 5.8S and 5S).

It localises to the cytoplasm. The chain is Small ribosomal subunit protein eS1 from Laccaria bicolor (strain S238N-H82 / ATCC MYA-4686) (Bicoloured deceiver).